The sequence spans 546 residues: Chaperonin GroEL (546 aa).

Residues 30–33, Lys-51, 87–91, Gly-415, 479–481, and Asp-495 contribute to the ATP site; these read TLGP, DGTTT, and NAA.

The protein belongs to the chaperonin (HSP60) family. In terms of assembly, forms a cylinder of 14 subunits composed of two heptameric rings stacked back-to-back. Interacts with the co-chaperonin GroES.

It is found in the cytoplasm. The enzyme catalyses ATP + H2O + a folded polypeptide = ADP + phosphate + an unfolded polypeptide.. In terms of biological role, together with its co-chaperonin GroES, plays an essential role in assisting protein folding. The GroEL-GroES system forms a nano-cage that allows encapsulation of the non-native substrate proteins and provides a physical environment optimized to promote and accelerate protein folding. The chain is Chaperonin GroEL from Pseudomonas putida (strain W619).